Consider the following 505-residue polypeptide: Histidine ammonia-lyase (505 aa).

The segment at residues 141 to 143 (ASG) is a cross-link (5-imidazolinone (Ala-Gly)). 2,3-didehydroalanine (Ser) is present on S142.

This sequence belongs to the PAL/histidase family. In terms of processing, contains an active site 4-methylidene-imidazol-5-one (MIO), which is formed autocatalytically by cyclization and dehydration of residues Ala-Ser-Gly.

The protein localises to the cytoplasm. The enzyme catalyses L-histidine = trans-urocanate + NH4(+). Its pathway is amino-acid degradation; L-histidine degradation into L-glutamate; N-formimidoyl-L-glutamate from L-histidine: step 1/3. This is Histidine ammonia-lyase from Bacillus cereus (strain ATCC 10987 / NRS 248).